The primary structure comprises 219 residues: Small ribosomal subunit protein uS3c (219 aa).

Residues 47–118 enclose the KH type-2 domain; the sequence is IRNHVRNSSN…KLRMTLVEVL (72 aa).

Belongs to the universal ribosomal protein uS3 family. In terms of assembly, part of the 30S ribosomal subunit.

The protein localises to the plastid. It localises to the chloroplast. This Chara vulgaris (Common stonewort) protein is Small ribosomal subunit protein uS3c (rps3).